Reading from the N-terminus, the 314-residue chain is DNA-directed RNA polymerase subunit alpha (314 aa).

An alpha N-terminal domain (alpha-NTD) region spans residues 1–229 (MLESKLKAPV…EHLNYFANPE (229 aa)). The segment at 246–314 (SAEEDLDLPL…LAKKGFTLKE (69 aa)) is alpha C-terminal domain (alpha-CTD).

Belongs to the RNA polymerase alpha chain family. Homodimer. The RNAP catalytic core consists of 2 alpha, 1 beta, 1 beta' and 1 omega subunit. When a sigma factor is associated with the core the holoenzyme is formed, which can initiate transcription.

It carries out the reaction RNA(n) + a ribonucleoside 5'-triphosphate = RNA(n+1) + diphosphate. Its function is as follows. DNA-dependent RNA polymerase catalyzes the transcription of DNA into RNA using the four ribonucleoside triphosphates as substrates. The polypeptide is DNA-directed RNA polymerase subunit alpha (rpoA) (Thermus aquaticus).